The following is a 210-amino-acid chain: ATP-dependent Clp protease proteolytic subunit (210 aa).

Catalysis depends on S107, which acts as the Nucleophile. H132 is an active-site residue.

It belongs to the peptidase S14 family. As to quaternary structure, fourteen ClpP subunits assemble into 2 heptameric rings which stack back to back to give a disk-like structure with a central cavity, resembling the structure of eukaryotic proteasomes.

Its subcellular location is the cytoplasm. The catalysed reaction is Hydrolysis of proteins to small peptides in the presence of ATP and magnesium. alpha-casein is the usual test substrate. In the absence of ATP, only oligopeptides shorter than five residues are hydrolyzed (such as succinyl-Leu-Tyr-|-NHMec, and Leu-Tyr-Leu-|-Tyr-Trp, in which cleavage of the -Tyr-|-Leu- and -Tyr-|-Trp bonds also occurs).. Functionally, cleaves peptides in various proteins in a process that requires ATP hydrolysis. Has a chymotrypsin-like activity. Plays a major role in the degradation of misfolded proteins. This Azorhizobium caulinodans (strain ATCC 43989 / DSM 5975 / JCM 20966 / LMG 6465 / NBRC 14845 / NCIMB 13405 / ORS 571) protein is ATP-dependent Clp protease proteolytic subunit.